The following is a 272-amino-acid chain: 2-C-methyl-D-erythritol 4-phosphate cytidylyltransferase (272 aa).

The protein belongs to the IspD/TarI cytidylyltransferase family. IspD subfamily.

It carries out the reaction 2-C-methyl-D-erythritol 4-phosphate + CTP + H(+) = 4-CDP-2-C-methyl-D-erythritol + diphosphate. The protein operates within isoprenoid biosynthesis; isopentenyl diphosphate biosynthesis via DXP pathway; isopentenyl diphosphate from 1-deoxy-D-xylulose 5-phosphate: step 2/6. Its function is as follows. Catalyzes the formation of 4-diphosphocytidyl-2-C-methyl-D-erythritol from CTP and 2-C-methyl-D-erythritol 4-phosphate (MEP). The polypeptide is 2-C-methyl-D-erythritol 4-phosphate cytidylyltransferase (Xanthomonas oryzae pv. oryzae (strain MAFF 311018)).